We begin with the raw amino-acid sequence, 821 residues long: DNA ligase (821 aa).

NAD(+) contacts are provided by residues 33-37 (DVDYD), 82-83 (SL), and Glu-113. The N6-AMP-lysine intermediate role is filled by Lys-115. NAD(+)-binding residues include Arg-136, Glu-173, Lys-290, and Lys-314. Cys-408, Cys-411, Cys-426, and Cys-432 together coordinate Zn(2+). Residues 741-821 (IVAGPLDGQT…RLLAYLAEHE (81 aa)) enclose the BRCT domain.

This sequence belongs to the NAD-dependent DNA ligase family. LigA subfamily. The cofactor is Mg(2+). Mn(2+) is required as a cofactor.

It carries out the reaction NAD(+) + (deoxyribonucleotide)n-3'-hydroxyl + 5'-phospho-(deoxyribonucleotide)m = (deoxyribonucleotide)n+m + AMP + beta-nicotinamide D-nucleotide.. In terms of biological role, DNA ligase that catalyzes the formation of phosphodiester linkages between 5'-phosphoryl and 3'-hydroxyl groups in double-stranded DNA using NAD as a coenzyme and as the energy source for the reaction. It is essential for DNA replication and repair of damaged DNA. The sequence is that of DNA ligase from Stenotrophomonas maltophilia (strain R551-3).